The primary structure comprises 87 residues: Putative membrane protein insertion efficiency factor (87 aa).

It belongs to the UPF0161 family.

It localises to the cell membrane. Could be involved in insertion of integral membrane proteins into the membrane. This Ligilactobacillus salivarius (strain UCC118) (Lactobacillus salivarius) protein is Putative membrane protein insertion efficiency factor.